The sequence spans 768 residues: UPF0313 protein VV1_2212 (768 aa).

The Radical SAM core domain occupies 363–640 (AYDMIKTSVN…LHKALLRYHD (278 aa)). [4Fe-4S] cluster contacts are provided by C377, C381, and C384. Residues 674-768 (DARTPAQRRK…GGRNQPSRAR (95 aa)) are disordered. Positions 679–689 (AQRRKSGRHGA) are enriched in basic residues. Positions 719 to 731 (GGQSNSAPSRSGS) are enriched in polar residues.

This sequence belongs to the UPF0313 family. The cofactor is [4Fe-4S] cluster.

In Vibrio vulnificus (strain CMCP6), this protein is UPF0313 protein VV1_2212.